Here is a 216-residue protein sequence, read N- to C-terminus: Nucleoside triphosphate pyrophosphatase (216 aa).

The active-site Proton acceptor is the Asp-82.

This sequence belongs to the Maf family. A divalent metal cation is required as a cofactor.

It localises to the cytoplasm. The catalysed reaction is a ribonucleoside 5'-triphosphate + H2O = a ribonucleoside 5'-phosphate + diphosphate + H(+). The enzyme catalyses a 2'-deoxyribonucleoside 5'-triphosphate + H2O = a 2'-deoxyribonucleoside 5'-phosphate + diphosphate + H(+). In terms of biological role, nucleoside triphosphate pyrophosphatase. May have a dual role in cell division arrest and in preventing the incorporation of modified nucleotides into cellular nucleic acids. In Mycobacterium marinum (strain ATCC BAA-535 / M), this protein is Nucleoside triphosphate pyrophosphatase.